We begin with the raw amino-acid sequence, 123 residues long: Small ribosomal subunit protein uS12cz/uS12cy (123 aa).

It belongs to the universal ribosomal protein uS12 family. In terms of assembly, part of the 30S ribosomal subunit.

It localises to the plastid. The protein resides in the chloroplast. Functionally, with S4 and S5 plays an important role in translational accuracy. Located at the interface of the 30S and 50S subunits. This is Small ribosomal subunit protein uS12cz/uS12cy (rps12-A) from Phaseolus vulgaris (Kidney bean).